Reading from the N-terminus, the 191-residue chain is Holliday junction branch migration complex subunit RuvA (191 aa).

The segment at 1–64 is domain I; sequence MIGRLSGVLL…EDAHILFGFG (64 aa). Residues 65-137 form a domain II region; that stretch reads TNEERNVFKQ…LKGKLGADLG (73 aa). The flexible linker stretch occupies residues 137-141; sequence GVAGA. The domain III stretch occupies residues 142–191; sequence VATDATSDILNALLALGYSDKEAMLALKQVPAGTGVSDGIKLALKSLSKA.

Belongs to the RuvA family. Homotetramer. Forms an RuvA(8)-RuvB(12)-Holliday junction (HJ) complex. HJ DNA is sandwiched between 2 RuvA tetramers; dsDNA enters through RuvA and exits via RuvB. An RuvB hexamer assembles on each DNA strand where it exits the tetramer. Each RuvB hexamer is contacted by two RuvA subunits (via domain III) on 2 adjacent RuvB subunits; this complex drives branch migration. In the full resolvosome a probable DNA-RuvA(4)-RuvB(12)-RuvC(2) complex forms which resolves the HJ.

The protein localises to the cytoplasm. The RuvA-RuvB-RuvC complex processes Holliday junction (HJ) DNA during genetic recombination and DNA repair, while the RuvA-RuvB complex plays an important role in the rescue of blocked DNA replication forks via replication fork reversal (RFR). RuvA specifically binds to HJ cruciform DNA, conferring on it an open structure. The RuvB hexamer acts as an ATP-dependent pump, pulling dsDNA into and through the RuvAB complex. HJ branch migration allows RuvC to scan DNA until it finds its consensus sequence, where it cleaves and resolves the cruciform DNA. This chain is Holliday junction branch migration complex subunit RuvA, found in Janthinobacterium sp. (strain Marseille) (Minibacterium massiliensis).